The primary structure comprises 156 residues: MKFNDVYNKHHKIIHHLLKKYNISYNYDEYYQLLLIKMWQLSQIYKPSSKQSLSSFLFTRLNYYLIDLFRQQNQLKDVILCENNSPTLTEQPTYFNEHDLRLQDIFKLLNHRERLWLKLYLEGYKQFEIAEIMSLSLSTIKLIKMSVKRKCQHNFN.

Positions 29–44 match the Polymerase core binding motif; the sequence is EYYQLLLIKMWQLSQI. Positions 126–145 form a DNA-binding region, H-T-H motif; the sequence is QFEIAEIMSLSLSTIKLIKM.

It belongs to the sigma-70 factor family.

In terms of biological role, sigma factors are initiation factors that promote the attachment of RNA polymerase to specific initiation sites and are then released. Sigma-S contributes to the protection against external stress, thus playing a role in cellular fitness and survival. The polypeptide is RNA polymerase sigma factor SigS (sigS) (Staphylococcus aureus (strain Mu50 / ATCC 700699)).